A 394-amino-acid polypeptide reads, in one-letter code: NAD(P)H-quinone oxidoreductase subunit H (394 aa).

It belongs to the complex I 49 kDa subunit family. NDH-1 can be composed of about 15 different subunits; different subcomplexes with different compositions have been identified which probably have different functions.

Its subcellular location is the cellular thylakoid membrane. The catalysed reaction is a plastoquinone + NADH + (n+1) H(+)(in) = a plastoquinol + NAD(+) + n H(+)(out). The enzyme catalyses a plastoquinone + NADPH + (n+1) H(+)(in) = a plastoquinol + NADP(+) + n H(+)(out). Functionally, NDH-1 shuttles electrons from an unknown electron donor, via FMN and iron-sulfur (Fe-S) centers, to quinones in the respiratory and/or the photosynthetic chain. The immediate electron acceptor for the enzyme in this species is believed to be plastoquinone. Couples the redox reaction to proton translocation, and thus conserves the redox energy in a proton gradient. Cyanobacterial NDH-1 also plays a role in inorganic carbon-concentration. This chain is NAD(P)H-quinone oxidoreductase subunit H, found in Acaryochloris marina (strain MBIC 11017).